A 514-amino-acid polypeptide reads, in one-letter code: JmjC domain-containing histone demethylation protein 1 (514 aa).

Residues 4 to 62 (IDTCPICVESPLEDSTTFNNIAWLQCDICNQWFHASCLKIPKIEVNNLHSYHCEGCSKS) form a PHD-type zinc finger. Residues 220 to 384 (SDVDSFGKSF…MHLRIYEIEK (165 aa)) enclose the JmjC domain. Residue Thr-267 participates in substrate binding. Residues His-270 and Asp-272 each coordinate Fe cation. Position 287 (Lys-287) interacts with substrate. A Fe cation-binding site is contributed by His-352. Positions 432–454 (KSEAHSRGEVHTKTETHAVKDEP) are enriched in basic and acidic residues. The tract at residues 432-456 (KSEAHSRGEVHTKTETHAVKDEPQP) is disordered.

This sequence belongs to the JHDM1 histone demethylase family. Fe(2+) is required as a cofactor.

It localises to the nucleus. It catalyses the reaction N(6),N(6)-dimethyl-L-lysyl(36)-[histone H3] + 2 2-oxoglutarate + 2 O2 = L-lysyl(36)-[histone H3] + 2 formaldehyde + 2 succinate + 2 CO2. Functionally, histone demethylase that specifically demethylates 'Lys-36' of histone H3, thereby playing a central role in histone code. This chain is JmjC domain-containing histone demethylation protein 1 (JHD1), found in Debaryomyces hansenii (strain ATCC 36239 / CBS 767 / BCRC 21394 / JCM 1990 / NBRC 0083 / IGC 2968) (Yeast).